A 571-amino-acid chain; its full sequence is Urease subunit alpha (571 aa).

Positions 133–571 (GGVDSHIHFI…LPLAQRYFLF (439 aa)) constitute a Urease domain. Residues His138, His140, and Lys221 each coordinate Ni(2+). Lys221 is modified (N6-carboxylysine). A substrate-binding site is contributed by His223. Residues His250 and His276 each coordinate Ni(2+). The active-site Proton donor is the His324. Asp364 serves as a coordination point for Ni(2+).

The protein belongs to the metallo-dependent hydrolases superfamily. Urease alpha subunit family. Heterotrimer of UreA (gamma), UreB (beta) and UreC (alpha) subunits. Three heterotrimers associate to form the active enzyme. Ni cation serves as cofactor. Post-translationally, carboxylation allows a single lysine to coordinate two nickel ions.

It is found in the cytoplasm. The enzyme catalyses urea + 2 H2O + H(+) = hydrogencarbonate + 2 NH4(+). The protein operates within nitrogen metabolism; urea degradation; CO(2) and NH(3) from urea (urease route): step 1/1. The chain is Urease subunit alpha from Anaeromyxobacter sp. (strain Fw109-5).